Reading from the N-terminus, the 413-residue chain is Corticotropin-releasing factor receptor 2 (413 aa).

The segment at residues 1-22 (MDSTIFEIIIDEFDANCSLLDA) is a signal peptide (not cleaved). Residues 1-110 (MDSTIFEIII…CVPILDNKRK (110 aa)) are Extracellular-facing. N16 carries an N-linked (GlcNAc...) asparagine glycan. 3 disulfide bridges follow: C17/C53, C43/C86, and C67/C101. N77, N89, and N97 each carry an N-linked (GlcNAc...) asparagine glycan. A helical transmembrane segment spans residues 111 to 141 (YALHYKIALIINYLGHCISILALVIAFLLFL). Over 142-148 (CLRSIRC) the chain is Cytoplasmic. The chain crosses the membrane as a helical span at residues 149–173 (LRNIIHWNLITTFILRNIMWFLLQM). At 174–187 (IDHNIHESNEVWCR) the chain is on the extracellular side. The cysteines at positions 186 and 256 are disulfide-linked. A helical transmembrane segment spans residues 188–216 (CITTIYNYFVVTNFFWMFVEGCYLHTAIV). Residues 217-223 (MTYSTDK) lie on the Cytoplasmic side of the membrane. The helical transmembrane segment at 224–251 (LRKWVFLFIGWCIPSPIIVTWAICKLFY) threads the bilayer. Topologically, residues 252 to 267 (ENEQCWIGKEPGKYID) are extracellular. The helical transmembrane segment at 268–293 (YIYQGRVILVLLINFVFLFNIVRILM) threads the bilayer. At 294-304 (TKLRASTTSET) the chain is on the cytoplasmic side. The helical transmembrane segment at 305–329 (IQYRKAVKATLVLLPLLGITYMLFF) threads the bilayer. Topologically, residues 330 to 336 (VNPGEDD) are extracellular. A helical transmembrane segment spans residues 337 to 366 (VSQIVFIYFNSFLQSFQGFFVSVFYCFLNG). The Cytoplasmic portion of the chain corresponds to 367–413 (EVRSAARKRWHRWQDHHSLRVRVARAMSIPTSPTRISFHSIKQTAAV).

It belongs to the G-protein coupled receptor 2 family. Post-translationally, a N-glycosylation site within the signal peptide impedes its proper cleavage and function.

Its subcellular location is the cell membrane. In terms of biological role, G-protein coupled receptor for CRH (corticotropin-releasing factor), UCN (urocortin), UCN2 and UCN3. Has high affinity for UCN. Ligand binding causes a conformation change that triggers signaling via guanine nucleotide-binding proteins (G proteins) and down-stream effectors, such as adenylate cyclase. Promotes the activation of adenylate cyclase, leading to increased intracellular cAMP levels. The polypeptide is Corticotropin-releasing factor receptor 2 (crhr2) (Xenopus laevis (African clawed frog)).